A 443-amino-acid chain; its full sequence is Glucose-6-phosphate isomerase (443 aa).

Glu285 (proton donor) is an active-site residue. Active-site residues include His306 and Lys420.

Belongs to the GPI family.

It localises to the cytoplasm. The catalysed reaction is alpha-D-glucose 6-phosphate = beta-D-fructose 6-phosphate. It participates in carbohydrate biosynthesis; gluconeogenesis. It functions in the pathway carbohydrate degradation; glycolysis; D-glyceraldehyde 3-phosphate and glycerone phosphate from D-glucose: step 2/4. Functionally, catalyzes the reversible isomerization of glucose-6-phosphate to fructose-6-phosphate. This Staphylococcus haemolyticus (strain JCSC1435) protein is Glucose-6-phosphate isomerase.